The primary structure comprises 274 residues: ATP synthase subunit delta (274 aa).

It belongs to the ATPase delta chain family. F-type ATPases have 2 components, F(1) - the catalytic core - and F(0) - the membrane proton channel. F(1) has five subunits: alpha(3), beta(3), gamma(1), delta(1), epsilon(1). F(0) has three main subunits: a(1), b(2) and c(10-14). The alpha and beta chains form an alternating ring which encloses part of the gamma chain. F(1) is attached to F(0) by a central stalk formed by the gamma and epsilon chains, while a peripheral stalk is formed by the delta and b chains.

It localises to the cell membrane. In terms of biological role, f(1)F(0) ATP synthase produces ATP from ADP in the presence of a proton or sodium gradient. F-type ATPases consist of two structural domains, F(1) containing the extramembraneous catalytic core and F(0) containing the membrane proton channel, linked together by a central stalk and a peripheral stalk. During catalysis, ATP synthesis in the catalytic domain of F(1) is coupled via a rotary mechanism of the central stalk subunits to proton translocation. Its function is as follows. This protein is part of the stalk that links CF(0) to CF(1). It either transmits conformational changes from CF(0) to CF(1) or is implicated in proton conduction. The polypeptide is ATP synthase subunit delta (Streptomyces coelicolor (strain ATCC BAA-471 / A3(2) / M145)).